The chain runs to 527 residues: Amine oxidase [flavin-containing] A (527 aa).

An N-acetylmethionine modification is found at methionine 1. Residues 1 to 497 are Cytoplasmic-facing; sequence MASREKTSIE…HTFWERNLPS (497 aa). Serine 383 carries the phosphoserine modification. Cysteine 406 carries the post-translational modification S-8alpha-FAD cysteine. A helical; Anchor for type IV membrane protein membrane pass occupies residues 498-518; that stretch reads VTGLLKLIGFTTSVTALWIVA. Residues 519–527 lie on the Mitochondrial intermembrane side of the membrane; it reads YKFRLLRRS. Residues 520–522 are interaction with membrane phospholipid headgroups; sequence KFR.

Belongs to the flavin monoamine oxidase family. As to quaternary structure, monomer, homo- or heterodimer (containing two subunits of similar size). Each subunit contains a covalently bound flavin. Enzymatically active as monomer. The cofactor is FAD.

The protein resides in the mitochondrion outer membrane. The enzyme catalyses a secondary aliphatic amine + O2 + H2O = a primary amine + an aldehyde + H2O2. The catalysed reaction is a primary methyl amine + O2 + H2O = an aldehyde + H2O2 + NH4(+). It carries out the reaction (R)-adrenaline + O2 + H2O = (R)-3,4-dihydroxymandelaldehyde + methylamine + H2O2. It catalyses the reaction dopamine + O2 + H2O = 3,4-dihydroxyphenylacetaldehyde + H2O2 + NH4(+). The enzyme catalyses tyramine + O2 + H2O = (4-hydroxyphenyl)acetaldehyde + H2O2 + NH4(+). The catalysed reaction is (R)-noradrenaline + O2 + H2O = (R)-3,4-dihydroxymandelaldehyde + H2O2 + NH4(+). It carries out the reaction serotonin + O2 + H2O = (5-hydroxyindol-3-yl)acetaldehyde + H2O2 + NH4(+). It catalyses the reaction kynuramine + O2 + H2O = 3-(2-aminophenyl)-3-oxopropanal + H2O2 + NH4(+). The enzyme catalyses tryptamine + O2 + H2O = indole-3-acetaldehyde + H2O2 + NH4(+). The catalysed reaction is 2-phenylethylamine + O2 + H2O = 2-phenylacetaldehyde + H2O2 + NH4(+). Its function is as follows. Catalyzes the oxidative deamination of primary and some secondary amine such as neurotransmitters, with concomitant reduction of oxygen to hydrogen peroxide and has important functions in the metabolism of neuroactive and vasoactive amines in the central nervous system and peripheral tissues. Preferentially oxidizes serotonin. Also catalyzes the oxidative deamination of kynuramine to 3-(2-aminophenyl)-3-oxopropanal that can spontaneously condense to 4-hydroxyquinoline. This Canis lupus familiaris (Dog) protein is Amine oxidase [flavin-containing] A.